Here is a 148-residue protein sequence, read N- to C-terminus: HTH-type transcriptional regulator Ptr1 (148 aa).

An HTH asnC-type domain is found at Leu2 to Glu63. The segment at residues Phe21–Lys40 is a DNA-binding region (H-T-H motif).

In terms of assembly, homodimer.

Its function is as follows. Participates in positive as well as negative regulation of transcription. Binds to its own promoter. The sequence is that of HTH-type transcriptional regulator Ptr1 (ptr1) from Methanocaldococcus jannaschii (strain ATCC 43067 / DSM 2661 / JAL-1 / JCM 10045 / NBRC 100440) (Methanococcus jannaschii).